We begin with the raw amino-acid sequence, 279 residues long: Aspartate/glutamate leucyltransferase (279 aa).

Positions 245-279 (ARERGARPPRGPGALKDACDLPLSDAQPADIEDLD) are disordered.

Belongs to the R-transferase family. Bpt subfamily.

The protein resides in the cytoplasm. The enzyme catalyses N-terminal L-glutamyl-[protein] + L-leucyl-tRNA(Leu) = N-terminal L-leucyl-L-glutamyl-[protein] + tRNA(Leu) + H(+). It catalyses the reaction N-terminal L-aspartyl-[protein] + L-leucyl-tRNA(Leu) = N-terminal L-leucyl-L-aspartyl-[protein] + tRNA(Leu) + H(+). Its function is as follows. Functions in the N-end rule pathway of protein degradation where it conjugates Leu from its aminoacyl-tRNA to the N-termini of proteins containing an N-terminal aspartate or glutamate. The chain is Aspartate/glutamate leucyltransferase from Caulobacter vibrioides (strain ATCC 19089 / CIP 103742 / CB 15) (Caulobacter crescentus).